A 538-amino-acid chain; its full sequence is Cytochrome P450 monooxygenase okaG (538 aa).

Residues leucine 3–phenylalanine 23 form a helical membrane-spanning segment. Cysteine 484 provides a ligand contact to heme.

Belongs to the cytochrome P450 family. The cofactor is heme.

It localises to the membrane. The enzyme catalyses 12-deshydroxyl okaramine E + 2 reduced [NADPH--hemoprotein reductase] + 2 O2 = 3-desmethyl okaramine B + 2 oxidized [NADPH--hemoprotein reductase] + 2 H2O + 2 H(+). Its pathway is alkaloid biosynthesis. Nonribosomal peptide synthetase; part of the gene cluster that mediates the biosynthesis of okaramine B, a prenylated indole alkaloid that possesses an unusual octacyclic ring system, including a four-membered azetidine ring and an eight-membered azocine ring, and that exhibits insecticidal activity against silkworm larvae. Within the pathway, okaG acts as a 2,3-diol synthase that installs 2,3-diol on the okaramine scaffold to convert 12-deshydroxyl okaramine E into 3-desmethyl okaramine B. OkaG is also able to produce use okaramine E and produce okaramine D with the help of the methyltransferase okaF. The biosynthesis begins with the NRPS okaA that condenses two tryptophan molecules into cyclo(L-Trp-L-Trp). Prenylation by the prenyltransferase okaC then leads to the formation of cyclo(N8-(alpha,alpha-dimethylallyl)-L-Trp-6a-(alpha,alpha-dime-thylallyl)-L-Trp). This is followed by indole 2,3-epoxidation by the FAD-dependent monooxygenase okaB to facilitate the formation of the hexahydropyrrolo[2,3-b]indole (HPI) moiety of okaramine C. The cytochrome P450 monooxygenase okaD then likely catalyzes formation of the eight-membered ring of okaramine A. The dioxygenase okaE further forms the unusual 2-dimethyl-3-methyl-azetidine ring to yield 12-deshydroxyl okaramine E, as well as the hydroxylation of 12-deshydroxyl okaramine E to produce okaramine E. The cytochrome P450 monoxygenase okaG converts 12-deshydroxyl okaramine E into 3-desmethyl okaramine B which is further methylated by the methyltransferase okaF into okaramine B. In a shunt pathway, okaG and okaF together are also able to convert okaramine E into okaramine D. Okaramine H is produced by nonenzymatic conversion from okaramine A. In Penicillium ochrochloron, this protein is Cytochrome P450 monooxygenase okaG.